We begin with the raw amino-acid sequence, 189 residues long: ECF RNA polymerase sigma-E factor (189 aa).

The segment at 1-153 is binds RNAP core; it reads MAEQLTDQAL…TAITLRELEG (153 aa). A sigma-70 factor domain-2 region spans residues 25–92; that stretch reads LVSRYQNKVA…KNYLTAQGRR (68 aa). The short motif at 48 to 61 is the Polymerase core binding element; sequence DVVQESFIKAYRSI. Positions 129-180 are sigma-70 factor domain-4; it reads RIVFDTIHNLPEDLKTAITLRELEGLSYEDIAEIMDCPVGTVRSRIFRAREM. Positions 156 to 175 form a DNA-binding region, H-T-H motif; it reads YEDIAEIMDCPVGTVRSRIF.

It belongs to the sigma-70 factor family. ECF subfamily. In terms of assembly, interacts transiently with the RNAP catalytic core formed by RpoA, RpoB, RpoC and RpoZ (2 alpha, 1 beta, 1 beta' and 1 omega subunit) to form the RNAP holoenzyme that can initiate transcription. Interacts 1:1 with anti-sigma-E factor RseA which prevents binding to RNAP catalytic core.

Its subcellular location is the cytoplasm. With respect to regulation, ECF sigma-E is held in an inactive form by its cognate anti-sigma factor (RseA) until released by regulated intramembrane proteolysis (RIP). RIP occurs when an extracytoplasmic signal (periplasmic stress and excess LPS) triggers a concerted proteolytic cascade to transmit information and elicit cellular responses. The anti-sigma factor RseA is an inner membrane protein, binding sigma-E in the cytoplasm and RseB in the periplasm. RseA is first cut extracytoplasmically (site-1 protease, S1P, by DegS), then within the membrane itself (site-2 protease, S2P, by RseP), while cytoplasmic proteases (predominantly ClpX-ClpP) finish degrading the regulatory protein, liberating sigma-E. Degradation of RseA requires 2 signals to activate DegS; an outer membrane protein (OMP) signal activates DegS, while an LPS signal causes release of RseB from RseA, freeing RseA to be cleaved. Functionally, sigma factors are initiation factors that promote the attachment of RNA polymerase (RNAP) to specific initiation sites and are then released. Extracytoplasmic function (ECF) sigma-E controls the envelope stress response, responding to periplasmic protein stress, increased levels of periplasmic lipopolysaccharide (LPS) as well as heat shock and oxidative stress; it controls protein processing in the extracytoplasmic compartment. The chain is ECF RNA polymerase sigma-E factor (rpoE) from Haemophilus influenzae (strain ATCC 51907 / DSM 11121 / KW20 / Rd).